Consider the following 269-residue polypeptide: Putative pyruvate, phosphate dikinase regulatory protein (269 aa).

147–154 (GVSRTSKT) is an ADP binding site.

Belongs to the pyruvate, phosphate/water dikinase regulatory protein family. PDRP subfamily.

It catalyses the reaction N(tele)-phospho-L-histidyl/L-threonyl-[pyruvate, phosphate dikinase] + ADP = N(tele)-phospho-L-histidyl/O-phospho-L-threonyl-[pyruvate, phosphate dikinase] + AMP + H(+). The enzyme catalyses N(tele)-phospho-L-histidyl/O-phospho-L-threonyl-[pyruvate, phosphate dikinase] + phosphate + H(+) = N(tele)-phospho-L-histidyl/L-threonyl-[pyruvate, phosphate dikinase] + diphosphate. Bifunctional serine/threonine kinase and phosphorylase involved in the regulation of the pyruvate, phosphate dikinase (PPDK) by catalyzing its phosphorylation/dephosphorylation. The protein is Putative pyruvate, phosphate dikinase regulatory protein of Geotalea daltonii (strain DSM 22248 / JCM 15807 / FRC-32) (Geobacter daltonii).